The primary structure comprises 98 residues: NADH-ubiquinone oxidoreductase chain 4L (98 aa).

A run of 3 helical transmembrane segments spans residues 1–21 (MTLIHMNILMAFSMSLVGLLM), 29–49 (ALLCLEGMMLSLFILAALTIL), and 61–81 (IILLVFAACEAAIGLALLVMV).

It belongs to the complex I subunit 4L family. In terms of assembly, core subunit of respiratory chain NADH dehydrogenase (Complex I) which is composed of 45 different subunits.

It is found in the mitochondrion inner membrane. It catalyses the reaction a ubiquinone + NADH + 5 H(+)(in) = a ubiquinol + NAD(+) + 4 H(+)(out). Functionally, core subunit of the mitochondrial membrane respiratory chain NADH dehydrogenase (Complex I) which catalyzes electron transfer from NADH through the respiratory chain, using ubiquinone as an electron acceptor. Part of the enzyme membrane arm which is embedded in the lipid bilayer and involved in proton translocation. This is NADH-ubiquinone oxidoreductase chain 4L (MT-ND4L) from Balaenoptera omurai (Omura's baleen whale).